We begin with the raw amino-acid sequence, 168 residues long: uncharacterized protein (168 aa).

The 62-residue stretch at 19-80 (LDKLDRHILN…VVSPKAVGRT (62 aa)) folds into the HTH asnC-type domain. The segment at residues 38–57 (LKELSEKVNSSVATCQRRVQ) is a DNA-binding region (H-T-H motif).

This is an uncharacterized protein from Haemophilus influenzae (strain ATCC 51907 / DSM 11121 / KW20 / Rd).